The chain runs to 506 residues: ATP synthase subunit alpha (506 aa).

171–178 (GDRKTGKT) contacts ATP.

The protein belongs to the ATPase alpha/beta chains family. In terms of assembly, F-type ATPases have 2 components, CF(1) - the catalytic core - and CF(0) - the membrane proton channel. CF(1) has five subunits: alpha(3), beta(3), gamma(1), delta(1), epsilon(1). CF(0) has three main subunits: a(1), b(2) and c(9-12). The alpha and beta chains form an alternating ring which encloses part of the gamma chain. CF(1) is attached to CF(0) by a central stalk formed by the gamma and epsilon chains, while a peripheral stalk is formed by the delta and b chains.

It is found in the cell inner membrane. It catalyses the reaction ATP + H2O + 4 H(+)(in) = ADP + phosphate + 5 H(+)(out). Functionally, produces ATP from ADP in the presence of a proton gradient across the membrane. The alpha chain is a regulatory subunit. In Anaplasma phagocytophilum (strain HZ), this protein is ATP synthase subunit alpha.